The primary structure comprises 245 residues: Probable phosphatase YcdX (245 aa).

Positions 7, 9, 15, 40, 73, 101, 131, 192, and 194 each coordinate Zn(2+).

Belongs to the PHP family. In terms of assembly, homotrimer. Zn(2+) is required as a cofactor.

The sequence is that of Probable phosphatase YcdX from Shigella dysenteriae serotype 1 (strain Sd197).